The following is a 311-amino-acid chain: Beta-lactamase (311 aa).

A signal peptide (tat-type signal) is located at residues 1–34 (MRLTQAPPSRRTLMTLGAGATMAALLPAGGAAYA). The active-site Acyl-ester intermediate is the Ser87. Residue 255 to 257 (KTG) coordinates substrate.

Belongs to the class-A beta-lactamase family. In terms of processing, predicted to be exported by the Tat system. The position of the signal peptide cleavage has not been experimentally proven.

It carries out the reaction a beta-lactam + H2O = a substituted beta-amino acid. The protein is Beta-lactamase (bla) of Kitasatospora aureofaciens (Streptomyces aureofaciens).